The primary structure comprises 382 residues: Serine protease 23 (382 aa).

Positions 1–22 are cleaved as a signal peptide; that stretch reads MAGIPGLFILLVLLCVFMQVSP. A glycan (N-linked (GlcNAc...) asparagine) is linked at N92. C159 and C175 are oxidised to a cystine. The active-site Charge relay system is H174. The N-linked (GlcNAc...) asparagine glycan is linked to N206. Active-site charge relay system residues include D239 and S315.

The protein belongs to the peptidase S1 family.

It is found in the secreted. The chain is Serine protease 23 (Prss23) from Mus musculus (Mouse).